A 148-amino-acid polypeptide reads, in one-letter code: Sec-independent protein translocase protein TatB (148 aa).

Residues 1–21 (MFGISFSELLLVGLVALLVLG) traverse the membrane as a helical segment. Residues 85-148 (EPTPVEHVGE…NDTTQPPRAP (64 aa)) are disordered. Residues 107–148 (APAVAPTESAPVVAPASVEHVAQTAAPTTPAPNDTTQPPRAP) are compositionally biased toward low complexity.

This sequence belongs to the TatB family. The Tat system comprises two distinct complexes: a TatABC complex, containing multiple copies of TatA, TatB and TatC subunits, and a separate TatA complex, containing only TatA subunits. Substrates initially bind to the TatABC complex, which probably triggers association of the separate TatA complex to form the active translocon.

It localises to the cell inner membrane. Its function is as follows. Part of the twin-arginine translocation (Tat) system that transports large folded proteins containing a characteristic twin-arginine motif in their signal peptide across membranes. Together with TatC, TatB is part of a receptor directly interacting with Tat signal peptides. TatB may form an oligomeric binding site that transiently accommodates folded Tat precursor proteins before their translocation. The sequence is that of Sec-independent protein translocase protein TatB from Pseudomonas fluorescens (strain Pf0-1).